A 374-amino-acid polypeptide reads, in one-letter code: Putative clathrin assembly protein At1g33340 (374 aa).

Residues 30 to 163 (YNEKAFFDIE…GWIINQAGKL (134 aa)) enclose the ENTH domain.

The protein localises to the membrane. It localises to the clathrin-coated pit. Its subcellular location is the golgi apparatus. It is found in the cytoplasmic vesicle. The protein resides in the clathrin-coated vesicle. The polypeptide is Putative clathrin assembly protein At1g33340 (Arabidopsis thaliana (Mouse-ear cress)).